Here is a 397-residue protein sequence, read N- to C-terminus: G2/mitotic-specific cyclin-B1 (397 aa).

A compositionally biased stretch (polar residues) spans 1 to 17 (MALRVTRNTRLASSENQ). The disordered stretch occupies residues 1-30 (MALRVTRNTRLASSENQGALPGKAAVANKP).

This sequence belongs to the cyclin family. Cyclin AB subfamily. In terms of assembly, interacts with the CDK1 protein kinase to form a serine/threonine kinase holoenzyme complex also known as maturation promoting factor (MPF). The cyclin subunit imparts substrate specificity to the complex.

In terms of biological role, essential for the control of the cell cycle at the G2/M (mitosis) transition. The sequence is that of G2/mitotic-specific cyclin-B1 (ccnb1) from Carassius auratus (Goldfish).